The primary structure comprises 117 residues: Large ribosomal subunit protein uL18 (117 aa).

Belongs to the universal ribosomal protein uL18 family. In terms of assembly, part of the 50S ribosomal subunit; part of the 5S rRNA/L5/L18/L25 subcomplex. Contacts the 5S and 23S rRNAs.

In terms of biological role, this is one of the proteins that bind and probably mediate the attachment of the 5S RNA into the large ribosomal subunit, where it forms part of the central protuberance. This is Large ribosomal subunit protein uL18 from Thioalkalivibrio sulfidiphilus (strain HL-EbGR7).